Consider the following 137-residue polypeptide: Cellular retinoic acid-binding protein 1 (137 aa).

The Nuclear localization signal signature appears at 21–31 (KALGVNAMLRK). 132 to 134 (RIY) is an all-trans-retinoate binding site.

Belongs to the calycin superfamily. Fatty-acid binding protein (FABP) family.

The protein resides in the cytoplasm. In terms of biological role, cytosolic CRABPs may regulate the access of retinoic acid to the nuclear retinoic acid receptors. The protein is Cellular retinoic acid-binding protein 1 (crabp1) of Hippocampus comes (Tiger tail seahorse).